Here is a 188-residue protein sequence, read N- to C-terminus: dCTP deaminase (188 aa).

DCTP is bound by residues 111-116 (KSTYAR), 135-137 (TLE), glutamine 156, tyrosine 170, and glutamine 180. Glutamate 137 functions as the Proton donor/acceptor in the catalytic mechanism.

The protein belongs to the dCTP deaminase family. In terms of assembly, homotrimer.

The catalysed reaction is dCTP + H2O + H(+) = dUTP + NH4(+). The protein operates within pyrimidine metabolism; dUMP biosynthesis; dUMP from dCTP (dUTP route): step 1/2. In terms of biological role, catalyzes the deamination of dCTP to dUTP. This is dCTP deaminase from Neisseria meningitidis serogroup B (strain ATCC BAA-335 / MC58).